Here is a 306-residue protein sequence, read N- to C-terminus: Palmitoyl-protein thioesterase ABHD10, mitochondrial (306 aa).

The transit peptide at 1–52 (MAVARLAAVAAWVPCRSWGCAAVPFGPHRGLSALLARIPQRAPRWLPACRQK) directs the protein to the mitochondrion. One can recognise an AB hydrolase-1 domain in the interval 78-177 (IIFIPGYLSY…KVVALLGVAT (100 aa)). Residues Ser-152, Asp-249, and His-279 each act as charge relay system in the active site.

Belongs to the AB hydrolase superfamily.

It is found in the mitochondrion. It carries out the reaction S-hexadecanoyl-L-cysteinyl-[protein] + H2O = L-cysteinyl-[protein] + hexadecanoate + H(+). The catalysed reaction is mycophenolic acid O-acyl-beta-D-glucuronide + H2O = mycophenolate + D-glucuronate + H(+). Its activity is regulated as follows. Inhibited by palmostatin-B. In terms of biological role, acts as an acyl-protein thioesterase that hydrolyzes fatty acids from acylated residues in proteins. Regulates the mitochondrial S-depalmitoylation of the nucleophilic active site residue of peroxiredoxin-5/PRDX5, a key antioxidant protein, therefore modulating mitochondrial antioxidant ability. Also catalyzes the deglucuronidation of mycophenolic acid acyl-glucuronide, an active metabolite of the immunosuppressant drug mycophenolate. This chain is Palmitoyl-protein thioesterase ABHD10, mitochondrial (ABHD10), found in Pongo abelii (Sumatran orangutan).